The following is a 447-amino-acid chain: Cytochrome P450 monooxygenase aunB (447 aa).

Cysteine 386 contributes to the heme binding site.

The protein belongs to the cytochrome P450 family. Heme serves as cofactor.

It catalyses the reaction 2 fonsecin B + NADPH + O2 + H(+) = aurasperone B + NADP(+) + 2 H2O. The catalysed reaction is 2 rubrofusarin B + NADPH + O2 + H(+) = aurasperone A + NADP(+) + 2 H2O. It functions in the pathway secondary metabolite biosynthesis. Functionally, cytochrome P450 monooxygenase; part of the gene cluster that mediates the biosynthesis of aurasperone B, a dimeric gamma-naphthopyrone. The first step in the biosynthesis of aurasperone B is the production of gamma-naphthopyrone precursor YWA1 by the non-reducing polyketide synthase albA, via condensation of one acetyl-CoA starter unit with 6 malonyl-CoA units. YWA1 is then methylated by aunE at position C-6 to yield foncesin which is further methylated at position C-8 by aunD to produce fonsecin B. A key enzyme in the biosynthetic pathway is the cytochrome P450 monooxygenase aunB which catalyzes the oxidative dimerization of fonsecin B to aurasperone B. AunB also catalyzes the oxidative dimerization of rubrofusarin B into aurasperone A. The polypeptide is Cytochrome P450 monooxygenase aunB (Aspergillus niger (strain ATCC MYA-4892 / CBS 513.88 / FGSC A1513)).